The sequence spans 210 residues: Small ribosomal subunit protein uS7 (210 aa).

Over residues 1 to 22 (MSDEQPAEDETEEAAAESEDTQ) the composition is skewed to acidic residues. A disordered region spans residues 1 to 23 (MSDEQPAEDETEEAAAESEDTQE).

It belongs to the universal ribosomal protein uS7 family. As to quaternary structure, part of the 30S ribosomal subunit. Contacts proteins S9 and S11.

One of the primary rRNA binding proteins, it binds directly to 16S rRNA where it nucleates assembly of the head domain of the 30S subunit. Is located at the subunit interface close to the decoding center. This chain is Small ribosomal subunit protein uS7, found in Halobacterium salinarum (strain ATCC 29341 / DSM 671 / R1).